The chain runs to 173 residues: Shikimate kinase (173 aa).

An ATP-binding site is contributed by 11-16 (GTGKTS). Position 15 (threonine 15) interacts with Mg(2+). Residues aspartate 33, arginine 57, and glycine 79 each contribute to the substrate site. Arginine 117 contacts ATP. Residue arginine 136 participates in substrate binding.

It belongs to the shikimate kinase family. In terms of assembly, monomer. Mg(2+) serves as cofactor.

Its subcellular location is the cytoplasm. It carries out the reaction shikimate + ATP = 3-phosphoshikimate + ADP + H(+). The protein operates within metabolic intermediate biosynthesis; chorismate biosynthesis; chorismate from D-erythrose 4-phosphate and phosphoenolpyruvate: step 5/7. Functionally, catalyzes the specific phosphorylation of the 3-hydroxyl group of shikimic acid using ATP as a cosubstrate. In Thermodesulfovibrio yellowstonii (strain ATCC 51303 / DSM 11347 / YP87), this protein is Shikimate kinase.